A 144-amino-acid chain; its full sequence is D-aminoacyl-tRNA deacylase (144 aa).

Residues 137–138 (GP) carry the Gly-cisPro motif, important for rejection of L-amino acids motif.

Belongs to the DTD family. In terms of assembly, homodimer.

The protein localises to the cytoplasm. The catalysed reaction is glycyl-tRNA(Ala) + H2O = tRNA(Ala) + glycine + H(+). It catalyses the reaction a D-aminoacyl-tRNA + H2O = a tRNA + a D-alpha-amino acid + H(+). In terms of biological role, an aminoacyl-tRNA editing enzyme that deacylates mischarged D-aminoacyl-tRNAs. Also deacylates mischarged glycyl-tRNA(Ala), protecting cells against glycine mischarging by AlaRS. Acts via tRNA-based rather than protein-based catalysis; rejects L-amino acids rather than detecting D-amino acids in the active site. By recycling D-aminoacyl-tRNA to D-amino acids and free tRNA molecules, this enzyme counteracts the toxicity associated with the formation of D-aminoacyl-tRNA entities in vivo and helps enforce protein L-homochirality. This is D-aminoacyl-tRNA deacylase from Acinetobacter baumannii (strain SDF).